The primary structure comprises 179 residues: CDP-archaeol synthase (179 aa).

4 helical membrane passes run 53 to 73 (FVGG…IEKL), 88 to 108 (FTLT…GSFI), 120 to 140 (FLIV…SLYP), and 145 to 165 (LFTA…HMGI).

Belongs to the CDP-archaeol synthase family. Mg(2+) serves as cofactor.

Its subcellular location is the cell membrane. The enzyme catalyses 2,3-bis-O-(geranylgeranyl)-sn-glycerol 1-phosphate + CTP + H(+) = CDP-2,3-bis-O-(geranylgeranyl)-sn-glycerol + diphosphate. The protein operates within membrane lipid metabolism; glycerophospholipid metabolism. Its function is as follows. Catalyzes the formation of CDP-2,3-bis-(O-geranylgeranyl)-sn-glycerol (CDP-archaeol) from 2,3-bis-(O-geranylgeranyl)-sn-glycerol 1-phosphate (DGGGP) and CTP. This reaction is the third ether-bond-formation step in the biosynthesis of archaeal membrane lipids. Can use CTP or dCTP, but not ATP, GTP or TTP. The protein is CDP-archaeol synthase of Archaeoglobus fulgidus (strain ATCC 49558 / DSM 4304 / JCM 9628 / NBRC 100126 / VC-16).